Here is a 1709-residue protein sequence, read N- to C-terminus: Intraflagellar transport protein 122 (1709 aa).

WD repeat units lie at residues 51-89 (TQHP…ALFK) and 132-171 (SFKG…LNSC). Residues 209–229 (TIPQTVTPSASASGRSGSGKR) are disordered. The WD 3 repeat unit spans residues 634-673 (LHRSPIVSLDISPDRKYISVVDRSDVVSVYKFLDDSEIVL). Residues 1231–1256 (IEALERLRLSGNTSKEAIIIKQLIDA) form an LRR 1 repeat. Positions 1378–1404 (LSGEDTVKASSQRSKKDNPPSLRSTIG) are disordered. The stretch at 1414-1436 (LGSLAHIDLGINNMNIPPGISEL) is one LRR 2 repeat.

It is found in the cell projection. The protein localises to the cilium. Its subcellular location is the flagellum. The protein resides in the cytoplasm. It localises to the cytoskeleton. It is found in the flagellum axoneme. The protein localises to the flagellum basal body. In terms of biological role, component of the intraflagellar transport complex A (IFT-A) involved in flagellar assembly. In Giardia intestinalis (strain ATCC 50803 / WB clone C6) (Giardia lamblia), this protein is Intraflagellar transport protein 122.